Here is a 159-residue protein sequence, read N- to C-terminus: Protein-export protein SecB (159 aa).

This sequence belongs to the SecB family. In terms of assembly, homotetramer, a dimer of dimers. One homotetramer interacts with 1 SecA dimer.

Its subcellular location is the cytoplasm. One of the proteins required for the normal export of preproteins out of the cell cytoplasm. It is a molecular chaperone that binds to a subset of precursor proteins, maintaining them in a translocation-competent state. It also specifically binds to its receptor SecA. The sequence is that of Protein-export protein SecB from Nitrobacter hamburgensis (strain DSM 10229 / NCIMB 13809 / X14).